A 230-amino-acid polypeptide reads, in one-letter code: UPF0688 protein C1orf174 homolog (230 aa).

Disordered stretches follow at residues 1–85 and 97–166; these read MRSR…SLPK and AEDS…VRAS. Low complexity predominate over residues 11–30; that stretch reads RSSARLRARSYSSASLASAR. Over residues 31-48 the composition is skewed to polar residues; it reads DVTSSTSAKTTCLASSSH. Over residues 49-78 the composition is skewed to basic and acidic residues; that stretch reads KATDRRTSKKFKYDKGHLVKAELQKLDPKS. Phosphoserine is present on serine 180.

The protein belongs to the UPF0688 family.

The protein resides in the nucleus. The sequence is that of UPF0688 protein C1orf174 homolog from Mus musculus (Mouse).